The sequence spans 339 residues: Aspartate carbamoyltransferase catalytic subunit (339 aa).

The carbamoyl phosphate site is built by Arg-59 and Thr-60. Lys-87 is an L-aspartate binding site. Residues Arg-109, His-142, and Gln-145 each coordinate carbamoyl phosphate. Arg-182 and Arg-253 together coordinate L-aspartate. Gly-294 and Pro-295 together coordinate carbamoyl phosphate.

The protein belongs to the aspartate/ornithine carbamoyltransferase superfamily. ATCase family. As to quaternary structure, heterododecamer (2C3:3R2) of six catalytic PyrB chains organized as two trimers (C3), and six regulatory PyrI chains organized as three dimers (R2).

It carries out the reaction carbamoyl phosphate + L-aspartate = N-carbamoyl-L-aspartate + phosphate + H(+). It functions in the pathway pyrimidine metabolism; UMP biosynthesis via de novo pathway; (S)-dihydroorotate from bicarbonate: step 2/3. Its function is as follows. Catalyzes the condensation of carbamoyl phosphate and aspartate to form carbamoyl aspartate and inorganic phosphate, the committed step in the de novo pyrimidine nucleotide biosynthesis pathway. This Prochlorococcus marinus (strain NATL1A) protein is Aspartate carbamoyltransferase catalytic subunit.